Here is a 434-residue protein sequence, read N- to C-terminus: Glutamyl-tRNA reductase (434 aa).

Substrate-binding positions include 52 to 55 (TCNR), Ser-115, 120 to 122 (ETQ), and Gln-126. Cys-53 (nucleophile) is an active-site residue. 195–200 (GAGEMI) is an NADP(+) binding site.

The protein belongs to the glutamyl-tRNA reductase family. Homodimer.

The enzyme catalyses (S)-4-amino-5-oxopentanoate + tRNA(Glu) + NADP(+) = L-glutamyl-tRNA(Glu) + NADPH + H(+). It functions in the pathway porphyrin-containing compound metabolism; protoporphyrin-IX biosynthesis; 5-aminolevulinate from L-glutamyl-tRNA(Glu): step 1/2. In terms of biological role, catalyzes the NADPH-dependent reduction of glutamyl-tRNA(Glu) to glutamate 1-semialdehyde (GSA). This Cupriavidus necator (strain ATCC 17699 / DSM 428 / KCTC 22496 / NCIMB 10442 / H16 / Stanier 337) (Ralstonia eutropha) protein is Glutamyl-tRNA reductase.